The following is a 484-amino-acid chain: Glycogen synthase (484 aa).

Position 15 (lysine 15) interacts with ADP-alpha-D-glucose.

This sequence belongs to the glycosyltransferase 1 family. Bacterial/plant glycogen synthase subfamily.

It catalyses the reaction [(1-&gt;4)-alpha-D-glucosyl](n) + ADP-alpha-D-glucose = [(1-&gt;4)-alpha-D-glucosyl](n+1) + ADP + H(+). It functions in the pathway glycan biosynthesis; glycogen biosynthesis. Its function is as follows. Synthesizes alpha-1,4-glucan chains using ADP-glucose. The sequence is that of Glycogen synthase from Geotalea uraniireducens (strain Rf4) (Geobacter uraniireducens).